The sequence spans 580 residues: DNA ligase B (580 aa).

Lys-135 acts as the N6-AMP-lysine intermediate in catalysis.

This sequence belongs to the NAD-dependent DNA ligase family. LigB subfamily.

It carries out the reaction NAD(+) + (deoxyribonucleotide)n-3'-hydroxyl + 5'-phospho-(deoxyribonucleotide)m = (deoxyribonucleotide)n+m + AMP + beta-nicotinamide D-nucleotide.. Functionally, catalyzes the formation of phosphodiester linkages between 5'-phosphoryl and 3'-hydroxyl groups in double-stranded DNA using NAD as a coenzyme and as the energy source for the reaction. In Photorhabdus laumondii subsp. laumondii (strain DSM 15139 / CIP 105565 / TT01) (Photorhabdus luminescens subsp. laumondii), this protein is DNA ligase B.